The sequence spans 813 residues: Nuclear pore complex protein 5 (813 aa).

The protein belongs to the nucleoporin Nup84/Nup107 family. Part of the nuclear pore complex (NPC). May interact with mdf-1.

It localises to the nucleus. Its subcellular location is the nuclear pore complex. It is found in the chromosome. The protein resides in the centromere. The protein localises to the kinetochore. It localises to the nucleus membrane. Its function is as follows. Involved in kinetochore assembly and chromosome segregation during embryonic mitosis. Required for the localization of the NDC80 complex member him-10, the chromosomal passenger complex component air-2 and nuclear pore complex proteins npp-23 and npp-15 to kinetochores during metaphase. Required for npp-23 localization to the nuclear envelope during interphase. Recruits mdf-1, a component of the spindle assembly checkpoint, to the nuclear envelope. Appears dispensable for the assembly of the nuclear pore complex and for nuclear protein import. The polypeptide is Nuclear pore complex protein 5 (Caenorhabditis elegans).